The chain runs to 162 residues: Circumsporozoite protein-related antigen (162 aa).

An N-terminal signal peptide occupies residues 1 to 16 (MKILSVFFLALFFIIF). 2 disordered regions span residues 24 to 44 (KTNKGTGSGVSSKKKNKKGSG) and 109 to 162 (PFKI…GPEH). Over residues 114-130 (SSDPADNANPDADSESN) the composition is skewed to low complexity. The span at 137–162 (PQVTAQDVTPEQPQGDDNNLVSGPEH) shows a compositional bias: polar residues.

The protein is Circumsporozoite protein-related antigen of Plasmodium falciparum.